Consider the following 423-residue polypeptide: Serine--tRNA ligase (423 aa).

An L-serine-binding site is contributed by 230-232 (TAE). 261–263 (RQE) serves as a coordination point for ATP. Glutamate 284 lines the L-serine pocket. Residue 348-351 (EISS) participates in ATP binding. Position 384 (serine 384) interacts with L-serine.

This sequence belongs to the class-II aminoacyl-tRNA synthetase family. Type-1 seryl-tRNA synthetase subfamily. As to quaternary structure, homodimer. The tRNA molecule binds across the dimer.

It is found in the cytoplasm. The catalysed reaction is tRNA(Ser) + L-serine + ATP = L-seryl-tRNA(Ser) + AMP + diphosphate + H(+). It carries out the reaction tRNA(Sec) + L-serine + ATP = L-seryl-tRNA(Sec) + AMP + diphosphate + H(+). It participates in aminoacyl-tRNA biosynthesis; selenocysteinyl-tRNA(Sec) biosynthesis; L-seryl-tRNA(Sec) from L-serine and tRNA(Sec): step 1/1. Functionally, catalyzes the attachment of serine to tRNA(Ser). Is also able to aminoacylate tRNA(Sec) with serine, to form the misacylated tRNA L-seryl-tRNA(Sec), which will be further converted into selenocysteinyl-tRNA(Sec). This is Serine--tRNA ligase from Thermoanaerobacter pseudethanolicus (strain ATCC 33223 / 39E) (Clostridium thermohydrosulfuricum).